The sequence spans 94 residues: Integration host factor subunit beta (94 aa).

The protein belongs to the bacterial histone-like protein family. In terms of assembly, heterodimer of an alpha and a beta chain.

Its function is as follows. This protein is one of the two subunits of integration host factor, a specific DNA-binding protein that functions in genetic recombination as well as in transcriptional and translational control. The protein is Integration host factor subunit beta of Mannheimia succiniciproducens (strain KCTC 0769BP / MBEL55E).